Here is a 128-residue protein sequence, read N- to C-terminus: Probable 4-amino-4-deoxy-L-arabinose-phosphoundecaprenol flippase subunit ArnF (128 aa).

The Cytoplasmic segment spans residues 1–2; the sequence is MG. A helical membrane pass occupies residues 3–23; sequence LMWGLFSVIIASVAQLSLGFA. The Periplasmic segment spans residues 24–35; the sequence is ASHLPPMTHLWD. The chain crosses the membrane as a helical span at residues 36–56; that stretch reads FIAALLAFGLDARILLLGLLG. The Cytoplasmic portion of the chain corresponds to 57–76; the sequence is YLLSVFCWYKTLHKLALSKA. Residues 77-97 traverse the membrane as a helical segment; that stretch reads YALLSMSYVLVWIASMVLPGW. The Periplasmic portion of the chain corresponds to 98–100; the sequence is EGT. The helical transmembrane segment at 101 to 121 threads the bilayer; sequence FSLKALLGVACIMSGLMLIFL. At 122–128 the chain is on the cytoplasmic side; that stretch reads PTTKQRY.

It belongs to the ArnF family. As to quaternary structure, heterodimer of ArnE and ArnF.

It is found in the cell inner membrane. The protein operates within bacterial outer membrane biogenesis; lipopolysaccharide biosynthesis. Its function is as follows. Translocates 4-amino-4-deoxy-L-arabinose-phosphoundecaprenol (alpha-L-Ara4N-phosphoundecaprenol) from the cytoplasmic to the periplasmic side of the inner membrane. This Shigella sonnei (strain Ss046) protein is Probable 4-amino-4-deoxy-L-arabinose-phosphoundecaprenol flippase subunit ArnF.